A 341-amino-acid polypeptide reads, in one-letter code: Phenylalanine--tRNA ligase alpha subunit (341 aa).

E256 serves as a coordination point for Mg(2+).

The protein belongs to the class-II aminoacyl-tRNA synthetase family. Phe-tRNA synthetase alpha subunit type 1 subfamily. In terms of assembly, tetramer of two alpha and two beta subunits. Mg(2+) is required as a cofactor.

It localises to the cytoplasm. The catalysed reaction is tRNA(Phe) + L-phenylalanine + ATP = L-phenylalanyl-tRNA(Phe) + AMP + diphosphate + H(+). In Clostridium perfringens (strain 13 / Type A), this protein is Phenylalanine--tRNA ligase alpha subunit.